The primary structure comprises 118 residues: Probable mitochondrial pyruvate carrier 2 (118 aa).

A run of 3 helical transmembrane segments spans residues 19-35 (VHFW…LSGI), 50-66 (YAAL…WSLI), and 72-94 (YFNA…RILV).

Belongs to the mitochondrial pyruvate carrier (MPC) (TC 2.A.105) family. As to quaternary structure, the functional 150 kDa pyruvate import complex is a heteromer of mpc1 and mpc2.

It localises to the mitochondrion inner membrane. In terms of biological role, mediates the uptake of pyruvate into mitochondria. The sequence is that of Probable mitochondrial pyruvate carrier 2 from Schizosaccharomyces pombe (strain 972 / ATCC 24843) (Fission yeast).